We begin with the raw amino-acid sequence, 81 residues long: MDPTIAAGALIGGGLIMAGGAIGAGIGDGIAGNALIAGIARQPEAQGRLFTPFFITVGLVEAAYFINLAFMALFVFATPVA.

2 helical membrane passes run 5–25 and 57–77; these read IAAG…IGAG and VGLV…FVFA.

This sequence belongs to the ATPase C chain family. As to quaternary structure, F-type ATPases have 2 components, F(1) - the catalytic core - and F(0) - the membrane proton channel. F(1) has five subunits: alpha(3), beta(3), gamma(1), delta(1), epsilon(1). F(0) has three main subunits: a(1), b(2) and c(10-14). The alpha and beta chains form an alternating ring which encloses part of the gamma chain. F(1) is attached to F(0) by a central stalk formed by the gamma and epsilon chains, while a peripheral stalk is formed by the delta and b chains.

It is found in the cell membrane. Its function is as follows. F(1)F(0) ATP synthase produces ATP from ADP in the presence of a proton or sodium gradient. F-type ATPases consist of two structural domains, F(1) containing the extramembraneous catalytic core and F(0) containing the membrane proton channel, linked together by a central stalk and a peripheral stalk. During catalysis, ATP synthesis in the catalytic domain of F(1) is coupled via a rotary mechanism of the central stalk subunits to proton translocation. In terms of biological role, key component of the F(0) channel; it plays a direct role in translocation across the membrane. A homomeric c-ring of between 10-14 subunits forms the central stalk rotor element with the F(1) delta and epsilon subunits. The protein is ATP synthase subunit c of Mycobacterium sp. (strain JLS).